The following is a 252-amino-acid chain: T-box transcription factor mls-1 (252 aa).

A DNA-binding region (T-box) is located at residues 40 to 210 (LWRRFHNLGT…SNPFAKGFRE (171 aa)).

In terms of assembly, may interact with unc-37.

The protein localises to the nucleus. Its function is as follows. Probable transcription factor required for the cell fate specification of non-striated uterine muscle precursor cells. Furthermore, may function with the transcriptional corepressor unc-37. This chain is T-box transcription factor mls-1, found in Caenorhabditis elegans.